Consider the following 93-residue polypeptide: Chaperone NapD (93 aa).

The protein belongs to the NapD family. Interacts with the cytoplasmic NapA precursor.

Its subcellular location is the cytoplasm. Its function is as follows. Chaperone for NapA, the catalytic subunit of the periplasmic nitrate reductase. It binds directly and specifically to the twin-arginine signal peptide of NapA, preventing premature interaction with the Tat translocase and premature export. The chain is Chaperone NapD from Haemophilus influenzae (strain ATCC 51907 / DSM 11121 / KW20 / Rd).